The following is a 172-amino-acid chain: MKAVFLTLLFGLVCTAQETPAEIDPSKIPGEWRIIYAAADNKDKIVEGGPLRNYYRRIECINDCESLSITFYLKDQGTCLLLTEVAKRQEGYVYVLEFYGTNTLEVIHVSENMLVTYVENYDGERITKMTEGLAKGTSFTPEELEKYQQLNSERGVPNENIENLIKTDNCPP.

The signal sequence occupies residues 1–16; it reads MKAVFLTLLFGLVCTA. Glutamine 17 is modified (pyrrolidone carboxylic acid). 2 disulfides stabilise this stretch: cysteine 60-cysteine 64 and cysteine 79-cysteine 170.

The protein belongs to the calycin superfamily. Lipocalin family. As to expression, found exclusively in skin. Produced in sweat glands and transported to the skin surface.

The protein resides in the secreted. Probable pheromone carrier. This Bos taurus (Bovine) protein is Allergen Bos d 2.